The sequence spans 1000 residues: Ribosome assembly protein 1 (1000 aa).

The region spanning 17–246 is the tr-type G domain; that stretch reads ENIRNFTLLA…YEKKLGLKQK (230 aa). Residues 26–33, 100–104, and 154–157 each bind GTP; these read AHVDHGKT, DSPGH, and NKMD.

Belongs to the TRAFAC class translation factor GTPase superfamily. Classic translation factor GTPase family.

The protein localises to the cytoplasm. The enzyme catalyses GTP + H2O = GDP + phosphate + H(+). Its activity is regulated as follows. GTPase activity is stimulated in the presence of 60S subunits. In terms of biological role, GTPase involved in the biogenesis of the 60S ribosomal subunit and translational activation of ribosomes. Together with sdo1, may trigger the GTP-dependent release of tif6 from 60S pre-ribosomes in the cytoplasm, thereby activating ribosomes for translation competence by allowing 80S ribosome assembly and facilitating tif6 recycling to the nucleus, where it is required for 60S rRNA processing and nuclear export. Inhibits GTPase activity of ribosome-bound EF-2. This is Ribosome assembly protein 1 (ria1) from Schizosaccharomyces pombe (strain 972 / ATCC 24843) (Fission yeast).